Reading from the N-terminus, the 236-residue chain is Small ribosomal subunit protein uS2c (236 aa).

This sequence belongs to the universal ribosomal protein uS2 family.

The protein localises to the plastid. It localises to the chloroplast. The sequence is that of Small ribosomal subunit protein uS2c (rps2) from Platanus occidentalis (Sycamore).